A 556-amino-acid chain; its full sequence is Formate--tetrahydrofolate ligase (556 aa).

Residue T65–S72 coordinates ATP.

Belongs to the formate--tetrahydrofolate ligase family.

The enzyme catalyses (6S)-5,6,7,8-tetrahydrofolate + formate + ATP = (6R)-10-formyltetrahydrofolate + ADP + phosphate. Its pathway is one-carbon metabolism; tetrahydrofolate interconversion. The protein is Formate--tetrahydrofolate ligase of Streptococcus agalactiae serotype V (strain ATCC BAA-611 / 2603 V/R).